We begin with the raw amino-acid sequence, 22 residues long: Mu-conotoxin CnIIIA (22 aa).

Disulfide bonds link Cys3/Cys15, Cys4/Cys21, and Cys10/Cys22. At Cys22 the chain carries Cysteine amide.

Belongs to the conotoxin M superfamily. Expressed by the venom duct. Has not been isolated from the crude venom.

The protein localises to the secreted. In terms of biological role, mu-conotoxins block voltage-gated sodium channels (Nav). This synthetic toxin moderately blocks rNav1.1/SCN1A, rNav1.2/SCN2A, rNav1.3/SCN3A, rNav1.4/SCN4A, rNav1.5/SCN5A, and mNav1.6/SCN8A. This block is very slowly reversible. Causes seizures when injected intracranially into mice. This is Mu-conotoxin CnIIIA from Conus consors (Singed cone).